Here is a 564-residue protein sequence, read N- to C-terminus: Probable diguanylate cyclase DgcQ (564 aa).

2 helical membrane passes run 20–40 and 360–380; these read LGPG…STLL and IALT…WYVI. The 136-residue stretch at 428–563 folds into the GGDEF domain; that stretch reads HPFSVIQVDL…GRNRVFASDN (136 aa). Residue Asp436 participates in Mg(2+) binding. 3 residues coordinate substrate: Asn444, His449, and Asp453. Glu479 provides a ligand contact to Mg(2+). Glu479 acts as the Proton acceptor in catalysis.

Homodimer. Mg(2+) serves as cofactor.

The protein localises to the cell inner membrane. The enzyme catalyses 2 GTP = 3',3'-c-di-GMP + 2 diphosphate. The protein operates within glycan metabolism; bacterial cellulose biosynthesis. It participates in purine metabolism; 3',5'-cyclic di-GMP biosynthesis. Functionally, catalyzes the synthesis of cyclic-di-GMP (c-di-GMP) via the condensation of 2 GTP molecules. Cyclic-di-GMP is a second messenger which controls cell surface-associated traits in bacteria. Involved in the regulation of cellulose production. The sequence is that of Probable diguanylate cyclase DgcQ from Escherichia coli O157:H7.